The primary structure comprises 467 residues: Coiled-coil domain-containing protein 71 (467 aa).

Residues 81–105 (PSQTKLQARAPNPTATSPPASAPRT) are disordered. Positions 88-105 (ARAPNPTATSPPASAPRT) are enriched in low complexity. Ser129 carries the post-translational modification Phosphoserine. Disordered stretches follow at residues 211-280 (KLRK…GTKT) and 349-416 (VRAK…KAWL). A compositionally biased stretch (polar residues) spans 253-265 (GHQSKTNRATGSP). Positions 279–359 (KTAQAKVART…RAKAKVARTQ (81 aa)) form a coiled coil. The segment covering 349–380 (VRAKAKVARTQPRGRGRPKGSAKARTTRKGQK) has biased composition (basic residues). Basic and acidic residues predominate over residues 392-401 (RAEEAKDLPP).

The chain is Coiled-coil domain-containing protein 71 (CCDC71) from Homo sapiens (Human).